The primary structure comprises 447 residues: Dihydroorotase (447 aa).

Residues His-81 and His-83 each coordinate Zn(2+). Substrate contacts are provided by residues 83–85 and Asn-115; that span reads HFR. Zn(2+)-binding residues include Asp-171, His-198, and His-252. Asn-298 provides a ligand contact to substrate. Asp-325 serves as a coordination point for Zn(2+). The active site involves Asp-325. Substrate is bound by residues His-329 and 343-344; that span reads FG.

This sequence belongs to the metallo-dependent hydrolases superfamily. DHOase family. Class I DHOase subfamily. The cofactor is Zn(2+).

The catalysed reaction is (S)-dihydroorotate + H2O = N-carbamoyl-L-aspartate + H(+). It functions in the pathway pyrimidine metabolism; UMP biosynthesis via de novo pathway; (S)-dihydroorotate from bicarbonate: step 3/3. Its function is as follows. Catalyzes the reversible cyclization of carbamoyl aspartate to dihydroorotate. The chain is Dihydroorotase from Ehrlichia chaffeensis (strain ATCC CRL-10679 / Arkansas).